A 415-amino-acid polypeptide reads, in one-letter code: Putative FNIP repeat-containing protein L415 (415 aa).

One copy of the FNIP repeat lies at 148 to 185 (FIKKGAIPDSVTHLYFGSDYLSKDIIPKNVVYLRFGDF).

In Acanthamoeba polyphaga mimivirus (APMV), this protein is Putative FNIP repeat-containing protein L415.